A 214-amino-acid polypeptide reads, in one-letter code: dITP/XTP pyrophosphatase (214 aa).

13–18 (SHNAGK) lines the substrate pocket. Positions 45 and 74 each coordinate Mg(2+). Aspartate 74 acts as the Proton acceptor in catalysis. Substrate is bound by residues serine 75, 163–166 (FGYD), lysine 186, and 199–200 (HR).

The protein belongs to the HAM1 NTPase family. As to quaternary structure, homodimer. The cofactor is Mg(2+).

The enzyme catalyses XTP + H2O = XMP + diphosphate + H(+). The catalysed reaction is dITP + H2O = dIMP + diphosphate + H(+). It carries out the reaction ITP + H2O = IMP + diphosphate + H(+). Pyrophosphatase that catalyzes the hydrolysis of nucleoside triphosphates to their monophosphate derivatives, with a high preference for the non-canonical purine nucleotides XTP (xanthosine triphosphate), dITP (deoxyinosine triphosphate) and ITP. Seems to function as a house-cleaning enzyme that removes non-canonical purine nucleotides from the nucleotide pool, thus preventing their incorporation into DNA/RNA and avoiding chromosomal lesions. The protein is dITP/XTP pyrophosphatase of Rhizobium meliloti (strain 1021) (Ensifer meliloti).